A 62-amino-acid polypeptide reads, in one-letter code: ATP synthase subunit K, mitochondrial (62 aa).

A helical transmembrane segment spans residues 14–30 (HHLAIATIGTVVALVAP).

F-type ATP synthases have 2 components, the catalytic core F(1) and the membrane-embedded component F(0), linked together by a central stalk and a peripheral stalk. The central stalk, also called rotor shaft, is often seen as part of F(1). The peripheral stalk is seen as part of F(0). F(0) contains the membrane channel next to the rotor. F-type ATP synthases form dimers but each monomer functions independently in ATP generation. The dimer consists of 18 different polypeptides: ATP1 (subunit alpha, part of F(1), 3 molecules per monomer), ATP2 (subunit beta, part of F(1), 3 molecules per monomer), ATP3 (subunit gamma, part of the central stalk), ATP4 (subunit b, part of the peripheral stalk), ATP5/OSCP (subunit 5/OSCP, part of the peripheral stalk), ATP6 (subunit a, part of the peripheral stalk), ATP7 (subunit d, part of the peripheral stalk), ATP8 (subunit 8, part of the peripheral stalk), OLI1 (subunit c, part of the rotor, 10 molecules per monomer), ATP14 (subunit h, part of the peripheral stalk), ATP15 (subunit epsilon, part of the central stalk), ATP16 (subunit delta, part of the central stalk), ATP17 (subunit f, part of the peripheral stalk), ATP18 (subunit i/j, part of the peripheral stalk). Dimer-specific subunits are ATP19 (subunit k, at interface between monomers), ATP20 (subunit g, at interface between monomers), TIM11 (subunit e, at interface between monomers). Also contains subunit L.

The protein localises to the mitochondrion inner membrane. Mitochondrial membrane ATP synthase (F(1)F(0) ATP synthase or Complex V) produces ATP from ADP in the presence of a proton gradient across the membrane which is generated by electron transport complexes of the respiratory chain. F-type ATP synthases consist of two structural domains, F(1) - containing the extramembraneous catalytic core, and F(0) - containing the membrane proton channel, linked together by a central stalk and a peripheral stalk. During catalysis, ATP synthesis in the catalytic domain of F(1) is coupled via a rotary mechanism of the central stalk subunits to proton translocation. Part of the complex F(0) domain. Minor subunit located with subunit a/ATP6 in the membrane. The K chain binds the dimeric form by interacting with the G and E chains. In Pichia angusta (Yeast), this protein is ATP synthase subunit K, mitochondrial.